The sequence spans 303 residues: Proteasome subunit beta (303 aa).

A propeptide spans 1 to 64 (MTWPDRDTSA…VTPSDAVPHG (64 aa)) (removed in mature form; by autocatalysis). The active-site Nucleophile is Thr65.

This sequence belongs to the peptidase T1B family. In terms of assembly, the 20S proteasome core is composed of 14 alpha and 14 beta subunits that assemble into four stacked heptameric rings, resulting in a barrel-shaped structure. The two inner rings, each composed of seven catalytic beta subunits, are sandwiched by two outer rings, each composed of seven alpha subunits. The catalytic chamber with the active sites is on the inside of the barrel. Has a gated structure, the ends of the cylinder being occluded by the N-termini of the alpha-subunits. Is capped by the proteasome-associated ATPase, ARC.

The protein resides in the cytoplasm. The enzyme catalyses Cleavage of peptide bonds with very broad specificity.. It participates in protein degradation; proteasomal Pup-dependent pathway. With respect to regulation, the formation of the proteasomal ATPase ARC-20S proteasome complex, likely via the docking of the C-termini of ARC into the intersubunit pockets in the alpha-rings, may trigger opening of the gate for substrate entry. Interconversion between the open-gate and close-gate conformations leads to a dynamic regulation of the 20S proteasome proteolysis activity. Component of the proteasome core, a large protease complex with broad specificity involved in protein degradation. The polypeptide is Proteasome subunit beta (Mycolicibacterium gilvum (strain PYR-GCK) (Mycobacterium gilvum (strain PYR-GCK))).